We begin with the raw amino-acid sequence, 362 residues long: Type-2 angiotensin II receptor (362 aa).

Residues 1 to 44 (MKANFSLATISKNITSSLHVGFVNISSNESTFNCSHKPSDKHLD) are Extracellular-facing. N-linked (GlcNAc...) asparagine glycosylation is found at Asn4, Asn13, Asn24, Asn28, and Asn33. Intrachain disulfides connect Cys34–Cys289 and Cys116–Cys194. Residues 45 to 69 (AIPVLYYIIFGVGFLVNTIVVTLFC) traverse the membrane as a helical segment. The Cytoplasmic segment spans residues 70 to 79 (CQKGPKKVSS). The chain crosses the membrane as a helical span at residues 80 to 103 (IYIFNLAVADLLLLATLPLWATYY). The angiotensin II site is built by Tyr102 and Tyr103. The Extracellular portion of the chain corresponds to 104-113 (SHRYDWIFGP). A helical membrane pass occupies residues 114-139 (VMCKVFGSFLTLNMFASIFFITCMSV). Over 140–158 (DRYQSVIYPFLSQRRNPWQ) the chain is Cytoplasmic. A helical membrane pass occupies residues 159 to 180 (ASYIVPLVWCMACLSSLPTFYF). Positions 181, 203, and 214 each coordinate angiotensin II. Residues 181–205 (RDVRTIEYLGVNACIMAFPPEKYAQ) lie on the Extracellular side of the membrane. Residues 206–231 (WSAGIALMKNILGFIIPLIFIATCYF) form a helical membrane-spanning segment. The Cytoplasmic segment spans residues 232–256 (GIRKHLLKTNSYGKNRITRDQVLKM). The helical transmembrane segment at 257 to 280 (AAAVVLAFIICWLPFHVLTFLDAL) threads the bilayer. An angiotensin II-binding site is contributed by Asp278. The Extracellular portion of the chain corresponds to 281–293 (AWMGVINSCEVIA). The helical transmembrane segment at 294-319 (VIDLALPFAILLGFTNSCINPFLYCF) threads the bilayer. Asp296 serves as a coordination point for angiotensin II. Over 320–362 (VGNRFQQKLRRVFRVPITWLQGKRENGSCGKSSSFREMETFVS) the chain is Cytoplasmic. The interval 323 to 332 (RFQQKLRRVF) is helix VIII.

The protein belongs to the G-protein coupled receptor 1 family. Interacts with MTUS1.

The protein localises to the cell membrane. Receptor for angiotensin II, a vasoconstricting peptide. Signals primarily via a non-canonical G-protein- and beta-arrestin independent pathways. Cooperates with MTUS1 to inhibit ERK2 activation and cell proliferation. This chain is Type-2 angiotensin II receptor (AGTR2), found in Ovis aries (Sheep).